Consider the following 397-residue polypeptide: Multidrug resistance protein MdtH (397 aa).

The next 10 membrane-spanning stretches (helical) occupy residues 11–31, 71–91, 94–114, 137–157, 163–183, 211–231, 242–262, 291–311, 338–358, and 366–386; these read WFLA…MPMI, FGAR…FASL, AQSG…GCLF, LLMM…SWLL, YVCL…LLIL, LVLI…IFPI, AVGW…YPLA, FATT…GIVI, LGLA…HDYA, and LPWL…VNCF.

It belongs to the major facilitator superfamily. DHA1 family. MdtH (TC 2.A.1.2.21) subfamily.

The protein resides in the cell inner membrane. The chain is Multidrug resistance protein MdtH from Aeromonas salmonicida (strain A449).